The sequence spans 764 residues: Putative wall-associated receptor kinase-like 13 (764 aa).

An N-terminal signal peptide occupies residues 1–26 (MRGNKNYYFLSLLYFLSLPILHFSSC). The Extracellular portion of the chain corresponds to 27–379 (THKCGDIQIP…HRCIDYHIPE (353 aa)). 8 N-linked (GlcNAc...) asparagine glycosylation sites follow: asparagine 78, asparagine 114, asparagine 121, asparagine 164, asparagine 233, asparagine 238, asparagine 259, and asparagine 283. Positions 308 to 372 (CTCDNHIASG…CINTSGGHRC (65 aa)) are atypical EGF-like. 3 disulfides stabilise this stretch: cysteine 310–cysteine 323, cysteine 345–cysteine 363, and cysteine 352–cysteine 372. N-linked (GlcNAc...) asparagine glycosylation is present at asparagine 365. A helical membrane pass occupies residues 380 to 400 (VMLGLGAGFFVLIVGGGIWWW). Topologically, residues 401–764 (RKLLRKRRMT…SGSTEIARSM (364 aa)) are cytoplasmic. Residues 454 to 728 (FNDNRVIGQG…REVSTALERI (275 aa)) form the Protein kinase domain. Residues 460–468 (IGQGGQGTV) and lysine 482 each bind ATP. Tyrosine 527 bears the Phosphotyrosine mark. Aspartate 579 functions as the Proton acceptor in the catalytic mechanism. Phosphothreonine is present on residues threonine 613 and threonine 618. Tyrosine 626 is subject to Phosphotyrosine.

Belongs to the protein kinase superfamily. Ser/Thr protein kinase family.

The protein resides in the membrane. It carries out the reaction L-seryl-[protein] + ATP = O-phospho-L-seryl-[protein] + ADP + H(+). The catalysed reaction is L-threonyl-[protein] + ATP = O-phospho-L-threonyl-[protein] + ADP + H(+). Its function is as follows. Putative serine/threonine-protein kinase that may function as a signaling receptor of extracellular matrix component. This Arabidopsis thaliana (Mouse-ear cress) protein is Putative wall-associated receptor kinase-like 13 (WAKL13).